The following is a 421-amino-acid chain: MRKIVAMAVICLTAASGLTSAYAAQLADDEAGLRIRLKNELRRADKPSAGAGRDIYAWVQGGLLDFNSGYYSNIIGVEGGAYYVYKLGARADMSTRWYLDGDKSFGFALGAVKIKPSENSLLKLGRFGTDYSYGSLPYRIPLMAGSSQRTLPTVSEGALGYWALTPNIDLWGMWRSRVFLWTDSTTGIRDEGVYNSQTGKYDKHRARSFLAASWHDDTSRYSLGASVQKDVSNQIQSILEKSIPLDPNYTLKGELLGFYAQLEGLSRNTSQPNETALVSGQLTWNAPWGSVFGSGGYLRHAMNGAVVDTDIGYPFSLSLDRNREGMQSWQLGVNYRLTPQFTLTFAPIVTRGYESSKRDVRIEGTGILGGMNYRVSEGPLQGMNFFLAADKGREKRDGSTLGDRLNYWDVKMSIQYDFMLK.

Residues 1 to 23 form the signal peptide; the sequence is MRKIVAMAVICLTAASGLTSAYA.

Belongs to the outer membrane porin (Opr) (TC 1.B.25) family.

It is found in the cell outer membrane. Its function is as follows. Enhances the activity of the UidB (GusB) glucuronide transporter, on its own however it has no transport activity. Glucuronide transport does not occur in strain K12 due to a variant at position 100 of the UidB (GusB, AC P0CE44, AC P0CE45) protein. The polypeptide is Membrane-associated protein UidC (uidC) (Escherichia coli (strain K12)).